The sequence spans 365 residues: Tartrate dehydrogenase/decarboxylase (365 aa).

D225, D250, and D254 together coordinate Mn(2+).

The protein belongs to the isocitrate and isopropylmalate dehydrogenases family. Homodimer. It depends on Mg(2+) as a cofactor. Mn(2+) is required as a cofactor. The cofactor is K(+).

The protein localises to the cytoplasm. It carries out the reaction tartrate + NAD(+) = 2-hydroxy-3-oxosuccinate + NADH + H(+). The catalysed reaction is (2R,3S)-tartrate + NAD(+) = 2-hydroxy-3-oxosuccinate + NADH + H(+). It catalyses the reaction (2R,3R)-tartrate + NAD(+) = 2-hydroxy-3-oxosuccinate + NADH + H(+). The enzyme catalyses (2R,3R)-tartrate + H(+) = (R)-glycerate + CO2. It carries out the reaction (R)-malate + NAD(+) = pyruvate + CO2 + NADH. It functions in the pathway carbohydrate acid metabolism; tartrate degradation; 2-hydroxy-3-oxosuccinate from L-tartrate: step 1/1. The protein operates within carbohydrate acid metabolism; tartrate degradation; 2-hydroxy-3-oxosuccinate from meso-tartrate: step 1/1. Its pathway is carbohydrate acid metabolism; tartrate degradation; D-glycerate from L-tartrate: step 1/1. In terms of biological role, has multiple catalytic activities. Apart from catalyzing the oxidation of (+)-tartrate to oxaloglycolate, also converts meso-tartrate to D-glycerate and catalyzes the oxidative decarboxylation of D-malate to pyruvate. This Pseudomonas putida (Arthrobacter siderocapsulatus) protein is Tartrate dehydrogenase/decarboxylase.